Here is a 403-residue protein sequence, read N- to C-terminus: Enoyl-[acyl-carrier-protein] reductase [NADH] (403 aa).

NAD(+) contacts are provided by residues Gly-49 to Tyr-54, Phe-75 to Glu-76, Asp-112 to Ala-113, and Leu-141 to Ala-142. Position 227 (Tyr-227) interacts with substrate. The active-site Proton donor is Tyr-237. Residues Lys-246 and Val-276–Thr-278 contribute to the NAD(+) site.

It belongs to the TER reductase family. In terms of assembly, monomer.

It catalyses the reaction a 2,3-saturated acyl-[ACP] + NAD(+) = a (2E)-enoyl-[ACP] + NADH + H(+). It participates in lipid metabolism; fatty acid biosynthesis. Involved in the final reduction of the elongation cycle of fatty acid synthesis (FAS II). Catalyzes the reduction of a carbon-carbon double bond in an enoyl moiety that is covalently linked to an acyl carrier protein (ACP). This Pseudomonas putida (strain GB-1) protein is Enoyl-[acyl-carrier-protein] reductase [NADH].